A 475-amino-acid polypeptide reads, in one-letter code: Beta-amyrin 16-alpha-hydroxylase CYP87D16 (475 aa).

The chain crosses the membrane as a helical span at residues 3-23 (VVGLIGVAVVTILITQYVYKW). Cys423 is a binding site for heme.

This sequence belongs to the cytochrome P450 family. Requires heme as cofactor.

Its subcellular location is the membrane. It carries out the reaction beta-amyrin + reduced [NADPH--hemoprotein reductase] + O2 = 16alpha-hydroxy-beta-amyrin + oxidized [NADPH--hemoprotein reductase] + H2O + H(+). Functionally, involved in the biosynthetic pathway of maesasaponins, which are oleanane-type saponins with diverse biological activities. Catalyzes the C-16alpha oxidation of beta-amyrin to form 16alpha-hydroxy-beta-amyrin. The sequence is that of Beta-amyrin 16-alpha-hydroxylase CYP87D16 from Maesa lanceolata (False assegai).